Consider the following 150-residue polypeptide: Cilia- and flagella-associated protein 68 (150 aa).

2 mn regions span residues 99–110 (TTYDTSYNNKMP) and 140–150 (KSTYMNSYSKP).

Belongs to the CFAP68 family. In terms of assembly, microtubule inner protein component of sperm flagellar doublet microtubules.

It is found in the cytoplasm. The protein localises to the cytoskeleton. Its subcellular location is the cilium axoneme. The protein resides in the flagellum axoneme. It localises to the nucleus. It is found in the cell projection. The protein localises to the cilium. In terms of biological role, microtubule inner protein (MIP) part of the dynein-decorated doublet microtubules (DMTs) in cilia axoneme, which is required for motile cilia beating. The sequence is that of Cilia- and flagella-associated protein 68 from Homo sapiens (Human).